Reading from the N-terminus, the 122-residue chain is Large ribosomal subunit protein uL18 (122 aa).

Residues 1–25 (MSTLSRKQQTQKRHRRLRRHLSGTA) form a disordered region. Residues 9 to 21 (QTQKRHRRLRRHL) are compositionally biased toward basic residues.

This sequence belongs to the universal ribosomal protein uL18 family. As to quaternary structure, part of the 50S ribosomal subunit; part of the 5S rRNA/L5/L18/L25 subcomplex. Contacts the 5S and 23S rRNAs.

Functionally, this is one of the proteins that bind and probably mediate the attachment of the 5S RNA into the large ribosomal subunit, where it forms part of the central protuberance. In Synechococcus sp. (strain CC9311), this protein is Large ribosomal subunit protein uL18.